A 133-amino-acid polypeptide reads, in one-letter code: MRMSLAQRVLLTWLFTLLFLIMLVLKLDEKAPWNWFLIFIPVWIFDTILLVLLIVKMAGRCKSGFDPRHGSHNIKKKAWYLIAMLLKLAFCLALCAKLEQFTTMNLSYVFIPLWALLAGALTELGYNVFFVRD.

4 helical membrane passes run 5–25 (LAQR…MLVL), 35–55 (WFLI…LLIV), 78–98 (AWYL…CAKL), and 110–130 (FIPL…NVFF).

It is found in the membrane. The sequence is that of Transmembrane protein 60 (TMEM60) from Homo sapiens (Human).